Consider the following 413-residue polypeptide: Putative adhesin P1-like protein MPN_144 (413 aa).

3 stretches are compositionally biased toward polar residues: residues 1-13 (MGQQ…SAGN), 25-54 (SGDS…NLTP), and 355-376 (SFGT…VFGT). 2 disordered regions span residues 1-60 (MGQQ…DWPN) and 355-413 (SFGT…VSGH). Residues 385–399 (LSGGGAGGGSSGSGQ) show a composition bias toward gly residues.

This sequence belongs to the adhesin P1 family.

This Mycoplasma pneumoniae (strain ATCC 29342 / M129 / Subtype 1) (Mycoplasmoides pneumoniae) protein is Putative adhesin P1-like protein MPN_144.